Reading from the N-terminus, the 733-residue chain is Phosphoribosylformylglycinamidine synthase subunit PurL (733 aa).

Residue H42 is part of the active site. 2 residues coordinate ATP: Y45 and K84. E86 serves as a coordination point for Mg(2+). Residues 87 to 90 and R109 contribute to the substrate site; that span reads SHNH. Catalysis depends on H88, which acts as the Proton acceptor. D110 contributes to the Mg(2+) binding site. Q233 is a substrate binding site. D261 lines the Mg(2+) pocket. 305–307 is a substrate binding site; that stretch reads ESQ. D489 and G526 together coordinate ATP. N527 is a Mg(2+) binding site. Residue S529 coordinates substrate.

This sequence belongs to the FGAMS family. In terms of assembly, monomer. Part of the FGAM synthase complex composed of 1 PurL, 1 PurQ and 2 PurS subunits.

The protein resides in the cytoplasm. The enzyme catalyses N(2)-formyl-N(1)-(5-phospho-beta-D-ribosyl)glycinamide + L-glutamine + ATP + H2O = 2-formamido-N(1)-(5-O-phospho-beta-D-ribosyl)acetamidine + L-glutamate + ADP + phosphate + H(+). The protein operates within purine metabolism; IMP biosynthesis via de novo pathway; 5-amino-1-(5-phospho-D-ribosyl)imidazole from N(2)-formyl-N(1)-(5-phospho-D-ribosyl)glycinamide: step 1/2. Part of the phosphoribosylformylglycinamidine synthase complex involved in the purines biosynthetic pathway. Catalyzes the ATP-dependent conversion of formylglycinamide ribonucleotide (FGAR) and glutamine to yield formylglycinamidine ribonucleotide (FGAM) and glutamate. The FGAM synthase complex is composed of three subunits. PurQ produces an ammonia molecule by converting glutamine to glutamate. PurL transfers the ammonia molecule to FGAR to form FGAM in an ATP-dependent manner. PurS interacts with PurQ and PurL and is thought to assist in the transfer of the ammonia molecule from PurQ to PurL. The polypeptide is Phosphoribosylformylglycinamidine synthase subunit PurL (Moorella thermoacetica (strain ATCC 39073 / JCM 9320)).